Consider the following 1597-residue polypeptide: Collagen alpha-1(XVII) chain (1597 aa).

Disordered regions lie at residues 1–155 and 168–188; these read MDVT…PSTR and GSRS…PIPK. Topologically, residues 1–468 are cytoplasmic; the sequence is MDVTKKNKRD…CGSCCSWWKW (468 aa). The interval 1–567 is nonhelical region (NC16A); sequence MDVTKKNKRD…AEQENGNLRG (567 aa). The segment covering 9-19 has biased composition (basic and acidic residues); sequence RDGSEVTERII. Composition is skewed to polar residues over residues 58 to 96, 111 to 120, and 170 to 184; these read THGS…SPGS, EGSSSGNSSP, and RSAS…SNTL. Residues 146–231 form a necessary for interaction with DST and for the recruitment of DST to hemidesmosome region; that stretch reads RLQSASPSTR…WSSTLPAGSS (86 aa). Residues 469 to 489 form a helical; Signal-anchor for type II membrane protein membrane-spanning segment; it reads LLGLLLTWLLLLGLLFGLIAL. The Extracellular segment spans residues 490–1597; sequence AEEVRALKAR…KGGSWRLTSY (1108 aa). Disordered regions lie at residues 562–857, 907–927, 970–1041, 1289–1316, and 1344–1394; these read NGNL…SSSS, LRGP…FRVR, LETY…ISSS, TAGV…VSGA, and FIVG…SSMG. The interval 568–1572 is triple-helical region; the sequence is SPGPKGDMGS…ELPLEEQPLA (1005 aa). The span at 604–632 shows a compositional bias: low complexity; it reads PKGQKGSVGEPGMEGPMGQRGREGPMGPR. Gly residues predominate over residues 665–674; the sequence is GPKGSGGSPG. 2 stretches are compositionally biased toward low complexity: residues 730-748 and 774-796; these read PGAV…AGPD and DPGK…PGRP. Residues 820 to 838 are compositionally biased toward pro residues; it reads PGPPGPPGAMGPPGPPGAP. Positions 847 to 857 are enriched in low complexity; sequence AGESFMGSSSS. Composition is skewed to pro residues over residues 910 to 922, 977 to 986, 1023 to 1035, 1296 to 1310, and 1348 to 1357; these read PPGP…PPDL, PPGPPGPPGP, PGPP…PGPP, PGPP…PRGP, and PPGPPGPQGP. Low complexity predominate over residues 1377–1393; it reads SSHSASVSRGSSYSSSM. N-linked (GlcNAc...) asparagine glycosylation is present at asparagine 1493. Positions 1531 to 1566 are disordered; it reads GHPALEGTREKKETKVTKSMRGGEREASPSSHELPL. Over residues 1537–1557 the composition is skewed to basic and acidic residues; sequence GTREKKETKVTKSMRGGEREA. The nonhelical region (NC1) stretch occupies residues 1573–1597; that stretch reads SVLAMAYGVHVKISPKGGSWRLTSY.

In terms of assembly, homotrimers of alpha 1(XVII)chains. Interacts (via cytoplasmic region) with ITGB4 (via cytoplasmic region). Interacts (via cytoplasmic region) with DST (via N-terminus). Interacts (via N-terminus) with PLEC. Interacts (via cytoplasmic region) with DSP. The intracellular/endo domain is disulfide-linked. Post-translationally, prolines at the third position of the tripeptide repeating unit (G-X-Y) are hydroxylated in some or all of the chains. In terms of processing, the ectodomain is shedded from the surface of keratinocytes resulting in a 120-kDa soluble form, also named as 120 kDa linear IgA disease antigen homolog. The shedding is mediated by membrane-bound metalloproteases. Upper lamina lucidalhemidesmosome.

The protein localises to the cell junction. It localises to the hemidesmosome. Its subcellular location is the membrane. It is found in the secreted. The protein resides in the extracellular space. The protein localises to the extracellular matrix. It localises to the basement membrane. The 120 kDa linear IgA disease antigen homolog is an anchoring filament component involved in dermal-epidermal cohesion. In Canis lupus familiaris (Dog), this protein is Collagen alpha-1(XVII) chain (COL17A1).